We begin with the raw amino-acid sequence, 71 residues long: UPF0346 protein Sez_1447 (71 aa).

The protein belongs to the UPF0346 family.

This is UPF0346 protein Sez_1447 from Streptococcus equi subsp. zooepidemicus (strain MGCS10565).